A 496-amino-acid polypeptide reads, in one-letter code: Lysine--tRNA ligase (496 aa).

Residues glutamate 409 and glutamate 416 each coordinate Mg(2+).

Belongs to the class-II aminoacyl-tRNA synthetase family. Homodimer. It depends on Mg(2+) as a cofactor.

It localises to the cytoplasm. The catalysed reaction is tRNA(Lys) + L-lysine + ATP = L-lysyl-tRNA(Lys) + AMP + diphosphate. The chain is Lysine--tRNA ligase from Streptococcus mutans serotype c (strain ATCC 700610 / UA159).